The chain runs to 482 residues: Glutamyl-tRNA(Gln) amidotransferase subunit A (482 aa).

Active-site charge relay system residues include K75 and S150. Residue S174 is the Acyl-ester intermediate of the active site.

The protein belongs to the amidase family. GatA subfamily. Heterotrimer of A, B and C subunits.

The enzyme catalyses L-glutamyl-tRNA(Gln) + L-glutamine + ATP + H2O = L-glutaminyl-tRNA(Gln) + L-glutamate + ADP + phosphate + H(+). In terms of biological role, allows the formation of correctly charged Gln-tRNA(Gln) through the transamidation of misacylated Glu-tRNA(Gln) in organisms which lack glutaminyl-tRNA synthetase. The reaction takes place in the presence of glutamine and ATP through an activated gamma-phospho-Glu-tRNA(Gln). The polypeptide is Glutamyl-tRNA(Gln) amidotransferase subunit A (Cyanothece sp. (strain PCC 7425 / ATCC 29141)).